We begin with the raw amino-acid sequence, 648 residues long: Interferon-induced GTP-binding protein Mx1 (648 aa).

Position 1 is an N-acetylmethionine (Met-1). Residues 1–26 (MVHSDLGIEELDSPESSLNGSEDMES) form a disordered region. The region spanning 56–329 (DLALPAIAVI…LIMHICKTLP (274 aa)) is the Dynamin-type G domain. The tract at residues 66–73 (GDQSSGKS) is G1 motif. 66–73 (GDQSSGKS) contributes to the GTP binding site. The tract at residues 91 to 93 (VTR) is G2 motif. Positions 167–170 (DLPG) are G3 motif. Residues 167 to 171 (DLPGI) and 236 to 239 (TKPD) each bind GTP. A G4 motif region spans residues 236 to 239 (TKPD). A G5 motif region spans residues 268 to 271 (KCRG). The bundle signaling element (BSE) stretch occupies residues 330–355 (LLENQIKETHQRITEELQKYGKDIPE). The tract at residues 355–522 (EEESEKMFCL…HFQMEQLVYC (168 aa)) is middle domain. The stalk stretch occupies residues 356 to 618 (EESEKMFCLI…KDQYDWLLKE (263 aa)). Residues 543–546 (KNKK) are critical for lipid-binding. The GED domain maps to 560–648 (TDEIFQHLTA…ARQRLAKFPG (89 aa)).

The protein belongs to the TRAFAC class dynamin-like GTPase superfamily. Dynamin/Fzo/YdjA family. In terms of assembly, homooligomer. Oligomerizes into multimeric filamentous or ring-like structures by virtue of its stalk domain. Oligomerization is critical for GTPase activity, protein stability, and recognition of viral target structures. Interacts with TRPC1, TRPC3, TRPC4, TRPC5, TRPC6 and TRPC7. Interacts with HSPA5. Interacts with TUBB/TUBB5. Interacts with DDX39A and DDX39B. ISGylated. As to expression, ubiquitously expressed.

It localises to the cytoplasm. The protein localises to the endoplasmic reticulum membrane. Its subcellular location is the perinuclear region. It is found in the nucleus. In terms of biological role, interferon-induced dynamin-like GTPase with antiviral activity against rabies virus (RABV), vesicular stomatitis virus (VSV) and murine pneumonia virus (MPV). Isoform 1 but not isoform 2 shows antiviral activity against vesicular stomatitis virus (VSV). In Bos taurus (Bovine), this protein is Interferon-induced GTP-binding protein Mx1 (MX1).